We begin with the raw amino-acid sequence, 78 residues long: Beta-defensin 135 (78 aa).

The N-terminal stretch at 1–24 (MATRSVLLALVVLNLLFYVPPGRS) is a signal peptide. Intrachain disulfides connect cysteine 37/cysteine 64 and cysteine 48/cysteine 66.

The protein belongs to the beta-defensin family.

The protein localises to the secreted. In terms of biological role, has antibacterial activity. The chain is Beta-defensin 135 (DEFB135) from Pan troglodytes (Chimpanzee).